The following is a 2545-amino-acid chain: MALPSLIAFGALAPWPASDRLDQLRNALQHHNSLKPITKAIQELPLLWKALSNQDQSLHSIAGEAAADQLAQWISGAGTAQLVDDKGNVTRMPLTTIAQIAQYVSYLCQYEEPLRHESIIKSAAIGGGIQGFCIGLLSALAVASGKTEDDVGNFAAMSVRLAFCVGAYVDLDRHRNGGDSKASTIAVRWKTPTTLEDIQRLLSRHPDTYIAVVRDIRDVTITVPASVMEHLIEDLSQIGASLRDTGVSGRYHVAIHEGIPQKILETCQAQFSPTINGQPLVRSNTDAHLFSGEDTALLALECILGERADWYSTISTAASALNQISANPFILSIGTDPVPQSVARSFPVVKATMIADRVNGIVEPEIPALAPDPFGSVSQGYPKDAIAIIGMGCRFPGADSIDEYWNLLTEGKSMLSEIPEARFGRGRPARSNSSLRFWGNFLRDIEAFDHGFFKKSPREAVSMDPQQRVLLQVAYEALESSGYFADSSRPEDVGCYIGACATDYDFNVASHPPSAYSAIGTLRSFLSGKLSHYFGWSGPSLVLDTACSSSAVAIHTACTALRTGQCSQALAGGITLMTSPYLYENFAAAHFLSPTGSSKPFSADADGYCRGEGGGLVVLKRLSDALRDNDHILGVIAGSAVNQNDNCVPITVPHTSSQGNLYERVTEQAGVRPSEVTFVEAHGTGTPVGDPIEMESIRRVFGGLHRVAPLIVSSAKGNIGHLEGASGVAALIKALLQMEHHLAPRQASFKTLNPKIPALEPDNLCIPTSNLALSGERLAACINNYGAAGSNAAMIVLEPPRKSVTYHDKSKMSISSRPKIHPIQLAAASLGGLLAYCVALDQYCQRLRFTQDTSEQPQVLSDLAYSLSTRLNQELPFTLTMTVTDLDQLQAQLRQQTVTSNNIKQRSKAPPVVLCFGGQVSDRVALDKCLWQESTLLRSYLDICDNTLRVLGYPGLYPSIFQNEAVTDVVLLHSMIFALQYSCAQAWLESGLKVDALVGHSFGQLTALCVSGILSLRDGLRLVAGRASLMQKHWGPESGKMIAIETDQQTLEELQKVICESNASYNFEIACFNGPTSHVVVSDRCSASELETKLMERAIRHRSLDVPYGFHSRFTEPLLPHLEDLASSLTFHEPKIPLETCTDMGTWTEPTSKLIAAHTREPVFFGKAIQRLQARLGPCTWLEAGSDSSIVNMVRRALGQASATANNFVSLQLNKPNSSKLVVDATVALWDASHRAQFWNFHRLQRRQYDHLRLPPYAWEKSKHWLELDMSAALNSDKTNTPPPTNTAAQVELPAVLIRLKSFDSQGHHFVINPSSEEYQTIVKDLESLGSAVCPSTLYVELASRAVRVAEEDKGNGLLSIKDLRVHSLLGVNVHQTISLDLQRLAQSWRFRITNADGSISGSNPGESFCHAEGTVNLKVADDSLEEEFCRYERLTGHNKIISIADDPRSESLRGNVLYNMLGRVVNYPDWYRGVKSVAALDLRVVAKVTCPVGIPEIVSKESTTQLPILESFIQIASLHANCLHECRGGEVFQFTRADHMQWAPGFDLHGYGDSAEASWDVLAYNSTNAENVVYDIFVHDAVTGRLVLLVLGANFTDIRRPVPISAGLNTSLASEKDIPMLKNANAERAEISLNSQLPAESHSQANLTRPGKDAKTSIYEDICGLLEKLADIPGDQVSGEATFDNLGVDSLMMIEVISELSTLFRVDLPIHELEELTDINSLVDYLHGKGCVGSLYVEDSGNASSLSSSHAISTGASSPPDSSGASAMTTPPETLSLVDYPGSLTTKQESRAAPAISNGTGRQPLDMGPYGIQQVFTRLRFDFEKYAEQTGAKGFWTNVYPQQADLVCAYVVDAYRKLGCDLATLAAGQQLPSMNTLPRHKHLVAQLRNILVESGLLELRGNQVHVRTAKTVDSTPTAIRYEQMLQRHPFGASETKLLNVTGPRLADCLTGQKEPLSLLFGDKHNRDLLADFYANSQMLKAATRLLAEFVSSTFSAAQSGDTLCILEVGAGTGGTTRYLVDVLNRCGIPYEYTFTDISQSLVTQAKRNFASLPQMRFMTFDCDRPAPQELLGKFHIVISTNCIHATSNITTSTTNILPTLRDDGVLCLVEFTRNLYWFDLVFGLLEGWWLFSDGRQHALANEWFWDRSLRAAGFKHVSWTDGNTEEAKTLRLICAFRGEAKEDRNLAAPNGAITKRAGVPMEEVVWKRVGTLDLSADIYFPKTPDPPGKKRPIALLIHGGGHFLFGRKDVPMKHIRTLIERGFLPISTDYRLCPETNLFEGPMTDCCDALKWATETLPTLPLSGPTVRPDPTKVVSLGWSSGGQLAMSLGYTAPVKGIKAPDAIFALYPPSDMESNHWHQPCYPLAAEEEPTEILDILAGVRESPIVEYAPVSEKRTMALSLTLKDDRASIILHMCWKSQTVPILVHGLPYKKNLPDTDKTDWKYRPPASAEQVQAISPLWQIRQGNYKTPTFIVHGNGDDWLPLSMSERTVEELKRRGIPASLAVPEQCGHAFDLFPVGDPLGVGWTSLEQGYDFICRQLGMS.

Residues 8–261 (AFGALAPWPA…HVAIHEGIPQ (254 aa)) are N-terminal acylcarrier protein transacylase (SAT) domain. The Ketosynthase family 3 (KS3) domain occupies 383–798 (KDAIAIIGMG…GSNAAMIVLE (416 aa)). Residues Cys-547, His-682, and His-721 each act as for beta-ketoacyl synthase activity in the active site. Residues 914–1218 (LCFGGQVSDR…VSLQLNKPNS (305 aa)) form a malonyl-CoA:ACP transacylase (MAT) domain region. Ser-1001 functions as the For acyl/malonyl transferase activity in the catalytic mechanism. Residues 1293–1423 (LPAVLIRLKS…GTVNLKVADD (131 aa)) form an N-terminal hotdog fold region. The region spanning 1293–1605 (LPAVLIRLKS…FTDIRRPVPI (313 aa)) is the PKS/mFAS DH domain. Residues 1296-1604 (VLIRLKSFDS…NFTDIRRPVP (309 aa)) form a product template (PT) domain region. Residues 1449-1605 (RSESLRGNVL…FTDIRRPVPI (157 aa)) are C-terminal hotdog fold. The Carrier domain occupies 1657–1731 (TSIYEDICGL…SLVDYLHGKG (75 aa)). O-(pantetheine 4'-phosphoryl)serine is present on Ser-1691. The span at 1748–1768 (SSSHAISTGASSPPDSSGASA) shows a compositional bias: low complexity. A disordered region spans residues 1748 to 1773 (SSSHAISTGASSPPDSSGASAMTTPP). Residues 1931–2163 (FGASETKLLN…GFKHVSWTDG (233 aa)) form a methyltransferase (CMeT) domain region. The interval 2198 to 2544 (AGVPMEEVVW…YDFICRQLGM (347 aa)) is claisen cyclase (CLC) domain. Catalysis depends on for thioesterase activity residues Ser-2321, Asp-2481, and His-2513.

Functionally, methylphloroacetophenone synthase; part of the gene cluster that mediates the biosynthesis of usnic acid, a dibenzofuran lichen product possessing a broad spectrum of biological activities. Two genes, mpas and mpao, comprise the usnic acid biosynthetic gene cluster with a single post-PKS enzyme, the methylphloracetophenone oxidase (mpao). The methylphloroacetophenone synthase (mpas) is a non-reducing polyketide synthase that produces methylphloracetophenone from acetate via a methylated tetraketide intermediate. The methylphloroacetophenone oxidase then carries out the oxidative dimerization of methylphloracetophenone to usnic acid. This chain is Methylphloroacetophenone synthase, found in Cladonia uncialis (Cup lichen).